The chain runs to 399 residues: 4-hydroxyphenylpyruvate dioxygenase (399 aa).

VOC domains lie at 23 to 166 (GYDH…LIER) and 197 to 355 (RIDH…LFTK). Fe cation contacts are provided by histidine 200, histidine 283, and glutamate 366.

The protein belongs to the 4HPPD family. Requires Fe cation as cofactor.

It carries out the reaction 3-(4-hydroxyphenyl)pyruvate + O2 = homogentisate + CO2. Its pathway is amino-acid degradation; L-phenylalanine degradation; acetoacetate and fumarate from L-phenylalanine: step 3/6. The sequence is that of 4-hydroxyphenylpyruvate dioxygenase (TCRP) from Coccidioides posadasii (strain C735) (Valley fever fungus).